Here is a 645-residue protein sequence, read N- to C-terminus: 1-deoxy-D-xylulose-5-phosphate synthase (645 aa).

Residues histidine 79 and 120 to 122 contribute to the thiamine diphosphate site; that span reads AHS. Residue aspartate 155 participates in Mg(2+) binding. Thiamine diphosphate-binding positions include 156–157, asparagine 184, tyrosine 293, and glutamate 375; that span reads GA. A Mg(2+)-binding site is contributed by asparagine 184.

Belongs to the transketolase family. DXPS subfamily. As to quaternary structure, homodimer. Requires Mg(2+) as cofactor. It depends on thiamine diphosphate as a cofactor.

The catalysed reaction is D-glyceraldehyde 3-phosphate + pyruvate + H(+) = 1-deoxy-D-xylulose 5-phosphate + CO2. The protein operates within metabolic intermediate biosynthesis; 1-deoxy-D-xylulose 5-phosphate biosynthesis; 1-deoxy-D-xylulose 5-phosphate from D-glyceraldehyde 3-phosphate and pyruvate: step 1/1. Catalyzes the acyloin condensation reaction between C atoms 2 and 3 of pyruvate and glyceraldehyde 3-phosphate to yield 1-deoxy-D-xylulose-5-phosphate (DXP). In Ruegeria sp. (strain TM1040) (Silicibacter sp.), this protein is 1-deoxy-D-xylulose-5-phosphate synthase.